Consider the following 513-residue polypeptide: GMP synthase [glutamine-hydrolyzing] (513 aa).

In terms of domain architecture, Glutamine amidotransferase type-1 spans 5 to 195 (LVLVIDFGGQ…VYNICGCTGD (191 aa)). The active-site Nucleophile is the C82. Catalysis depends on residues H169 and E171. The region spanning 196–388 (WKMDSFVEKT…LGIPEKLVFR (193 aa)) is the GMPS ATP-PPase domain. 223-229 (SGGVDSS) provides a ligand contact to ATP.

As to quaternary structure, homodimer.

It catalyses the reaction XMP + L-glutamine + ATP + H2O = GMP + L-glutamate + AMP + diphosphate + 2 H(+). It functions in the pathway purine metabolism; GMP biosynthesis; GMP from XMP (L-Gln route): step 1/1. In terms of biological role, catalyzes the synthesis of GMP from XMP. In Clostridium botulinum (strain Alaska E43 / Type E3), this protein is GMP synthase [glutamine-hydrolyzing].